Consider the following 122-residue polypeptide: Large ribosomal subunit protein uL14 (122 aa).

Forms a cluster with proteins L3 and L19. In the 70S ribosome, L14 and L19 interact and together make contacts with the 16S rRNA in bridges B5 and B8. Part of the 50S ribosomal subunit.

Binds to 23S rRNA. Forms part of two intersubunit bridges in the 70S ribosome. This is Large ribosomal subunit protein uL14 from Rhodopseudomonas palustris (strain ATCC BAA-98 / CGA009).